The primary structure comprises 139 residues: Peptide methionine sulfoxide reductase B5 (139 aa).

N-acetylalanine is present on A2. Residues 12–133 (EEEWRAVLSP…NSVSISFNPA (122 aa)) enclose the MsrB domain. 4 residues coordinate Zn(2+): C51, C54, C97, and C100. A disulfide bridge connects residues C69 and C122. The Nucleophile role is filled by C122.

This sequence belongs to the MsrB Met sulfoxide reductase family. Requires Zn(2+) as cofactor.

The protein localises to the cytoplasm. The protein resides in the cytosol. It catalyses the reaction L-methionyl-[protein] + [thioredoxin]-disulfide + H2O = L-methionyl-(R)-S-oxide-[protein] + [thioredoxin]-dithiol. Its function is as follows. Catalyzes the reduction of methionine sulfoxide (MetSO) to methionine in proteins. Plays a protective role against oxidative stress by restoring activity to proteins that have been inactivated by methionine oxidation. MSRB family specifically reduces the MetSO R-enantiomer. The sequence is that of Peptide methionine sulfoxide reductase B5 (MSRB5) from Arabidopsis thaliana (Mouse-ear cress).